We begin with the raw amino-acid sequence, 1456 residues long: Retrovirus-related Pol polyprotein from transposon RE2 (1456 aa).

Positions 205–252 (NVVTHRNTNTNRNQNNRGDNRNYNNNNNRSNSWQPSSSGSRSDNRQPK) are disordered. Residues 210–245 (RNTNTNRNQNNRGDNRNYNNNNNRSNSWQPSSSGSR) show a composition bias toward low complexity. A CCHC-type zinc finger spans residues 257 to 273 (RCQICSVQGHSAKRCPQ). Residues 276-291 (QFQSTTNQQQSTSPFT) are compositionally biased toward low complexity. The tract at residues 276 to 295 (QFQSTTNQQQSTSPFTPWQP) is disordered. Aspartate 313 functions as the For protease activity in the catalytic mechanism. An Integrase catalytic domain is found at 498–661 (TSSKPLEYIY…SPFQKLFGQP (164 aa)). Positions 509 and 571 each coordinate Mg(2+). Positions 738 to 754 (STSQEQRSDSAPNWPSH) are enriched in polar residues. The disordered stretch occupies residues 738-896 (STSQEQRSDS…PPLPPVLPAP (159 aa)). Low complexity predominate over residues 793 to 814 (SSSNLPSSSISSPSSSEPTAPS). A compositionally biased stretch (polar residues) spans 816–827 (NGPQPTAQPHQT). Low complexity-rich tracts occupy residues 828-841 (QNSN…NNPN) and 849-886 (SPNQ…STST). Residues 887–896 (PPLPPVLPAP) show a composition bias toward pro residues. In terms of domain architecture, Reverse transcriptase Ty1/copia-type spans 965–1208 (NHTWDLVPPP…LTAKPVATPM (244 aa)).

It catalyses the reaction DNA(n) + a 2'-deoxyribonucleoside 5'-triphosphate = DNA(n+1) + diphosphate. This Arabidopsis thaliana (Mouse-ear cress) protein is Retrovirus-related Pol polyprotein from transposon RE2 (RE2).